The sequence spans 163 residues: Succinate dehydrogenase assembly factor 2-A, mitochondrial (163 aa).

The transit peptide at 1–23 directs the protein to the mitochondrion; that stretch reads MLRQLRLTMDISGWIFLPWRRSM.

Belongs to the SDHAF2 family. As to quaternary structure, interacts with the flavoprotein subunit within the SDH catalytic dimer.

It is found in the mitochondrion matrix. Its function is as follows. Plays an essential role in the assembly of succinate dehydrogenase (SDH), an enzyme complex (also referred to as respiratory complex II) that is a component of both the tricarboxylic acid (TCA) cycle and the mitochondrial electron transport chain, and which couples the oxidation of succinate to fumarate with the reduction of ubiquinone (coenzyme Q) to ubiquinol. Required for flavinylation (covalent attachment of FAD) of the flavoprotein subunit of the SDH catalytic dimer. The chain is Succinate dehydrogenase assembly factor 2-A, mitochondrial from Drosophila sechellia (Fruit fly).